Here is an 827-residue protein sequence, read N- to C-terminus: Glycerol-3-phosphate acyltransferase (827 aa).

The HXXXXD motif motif lies at 325 to 330 (CHRSHM).

Belongs to the GPAT/DAPAT family.

The protein localises to the cell inner membrane. It catalyses the reaction sn-glycerol 3-phosphate + an acyl-CoA = a 1-acyl-sn-glycero-3-phosphate + CoA. It participates in phospholipid metabolism; CDP-diacylglycerol biosynthesis; CDP-diacylglycerol from sn-glycerol 3-phosphate: step 1/3. The sequence is that of Glycerol-3-phosphate acyltransferase from Shigella sonnei (strain Ss046).